Consider the following 459-residue polypeptide: Zeatin O-glucosyltransferase (459 aa).

The active-site Proton acceptor is H26. An an anthocyanidin-binding site is contributed by H26. The active-site Charge relay is the D125. The UDP-alpha-D-glucose site is built by S148, A335, Q337, H352, W355, N356, S357, E360, D376, and Q377.

It belongs to the UDP-glycosyltransferase family.

The enzyme catalyses trans-zeatin + UDP-alpha-D-glucose = O-beta-D-glucosyl-trans-zeatin + UDP + H(+). In terms of biological role, may regulate active versus storage forms of cytokinins, and could have an impact on seed growth. Can also use UDP-xylose to catalyze the formation of O-xylosylzeatin but at much lower affinity. In Phaseolus lunatus (Lima bean), this protein is Zeatin O-glucosyltransferase.